Here is a 298-residue protein sequence, read N- to C-terminus: Mimecan (298 aa).

An N-terminal signal peptide occupies residues 1-20 (MKTLQSTLLLLLFVPLIKPA). Asn88 carries an N-linked (GlcNAc...) (keratan sulfate) asparagine glycan. 7 LRR repeats span residues 112 to 131 (DAVP…FNKI), 132 to 155 (KKLT…GNLI), 156 to 179 (EDIE…ENQL), 180 to 199 (LKLP…YNKI), 200 to 225 (KSRG…HNAL), 226 to 246 (ESVP…FNNI), and 247 to 277 (ASIT…GNPI). Asn214 carries N-linked (GlcNAc...) (keratan sulfate) asparagine glycosylation. An intrachain disulfide couples Cys255 to Cys288. Residue Asn258 is glycosylated (N-linked (GlcNAc...) (keratan sulfate) asparagine).

This sequence belongs to the small leucine-rich proteoglycan (SLRP) family. SLRP class III subfamily. Contains keratan sulfate.

The protein resides in the secreted. The protein localises to the extracellular space. It is found in the extracellular matrix. Induces bone formation in conjunction with TGF-beta-1 or TGF-beta-2. The protein is Mimecan (OGN) of Pongo abelii (Sumatran orangutan).